The sequence spans 23 residues: MLYANPNTESSPVGFRKKYDNFI.

Belongs to the aldehyde dehydrogenase family.

The enzyme catalyses an aldehyde + NAD(+) + H2O = a carboxylate + NADH + 2 H(+). This is Aldehyde dehydrogenase from Moraxella sp. (strain TAE123).